The sequence spans 105 residues: Flagellar transcriptional regulator FlhD (105 aa).

This sequence belongs to the FlhD family. Homodimer; disulfide-linked. Forms a heterohexamer composed of two FlhC and four FlhD subunits. Each FlhC binds a FlhD dimer, forming a heterotrimer, and a hexamer assembles by dimerization of two heterotrimers.

It is found in the cytoplasm. In terms of biological role, functions in complex with FlhC as a master transcriptional regulator that regulates transcription of several flagellar and non-flagellar operons by binding to their promoter region. Activates expression of class 2 flagellar genes, including fliA, which is a flagellum-specific sigma factor that turns on the class 3 genes. Also regulates genes whose products function in a variety of physiological pathways. The chain is Flagellar transcriptional regulator FlhD from Cupriavidus necator (strain ATCC 17699 / DSM 428 / KCTC 22496 / NCIMB 10442 / H16 / Stanier 337) (Ralstonia eutropha).